The primary structure comprises 58 residues: UPF0391 membrane protein Maqu_2901 (58 aa).

The next 2 membrane-spanning stretches (helical) occupy residues 4–24 and 28–48; these read WAIV…GGIA and AGFA…SLVV.

Belongs to the UPF0391 family.

The protein resides in the cell membrane. In Marinobacter nauticus (strain ATCC 700491 / DSM 11845 / VT8) (Marinobacter aquaeolei), this protein is UPF0391 membrane protein Maqu_2901.